Here is a 188-residue protein sequence, read N- to C-terminus: MIIIITGTPGSGKSTIVDLLSKKLGFEKLHVSSFLIQNKAFSEYDELRQSYVIDEEKAFQLIDSFIKDKNVVIETIYPSLISHADKVIVLRKDPRVLYTELKRRGWGELKIAENVMAEILGVISGEAKEYFGNICEINVTNKKPEEVVEQILSNNCDNVDWLNIEEIQDLLISLDKVISSYEDSISDE.

Positions 10, 12, 13, 14, and 15 each coordinate ATP. Positions 30 to 53 (HVSSFLIQNKAFSEYDELRQSYVI) are NMP. An LID region spans residues 103–113 (RRGWGELKIAE). ATP contacts are provided by Arg104 and Lys142.

Belongs to the adenylate kinase family. AK6 subfamily. In terms of assembly, interacts with uS11. Not a structural component of 40S pre-ribosomes, but transiently interacts with them by binding to uS11.

It catalyses the reaction AMP + ATP = 2 ADP. It carries out the reaction ATP + H2O = ADP + phosphate + H(+). Functionally, broad-specificity nucleoside monophosphate (NMP) kinase that catalyzes the reversible transfer of the terminal phosphate group between nucleoside triphosphates and monophosphates. Also has ATPase activity. Involved in the late maturation steps of the 30S ribosomal particles, specifically 16S rRNA maturation. While NMP activity is not required for ribosome maturation, ATPase activity is. Associates transiently with small ribosomal subunit protein uS11. ATP hydrolysis breaks the interaction with uS11. May temporarily remove uS11 from the ribosome to enable a conformational change of the ribosomal RNA that is needed for the final maturation step of the small ribosomal subunit. This is Putative adenylate kinase from Sulfurisphaera tokodaii (strain DSM 16993 / JCM 10545 / NBRC 100140 / 7) (Sulfolobus tokodaii).